Consider the following 985-residue polypeptide: UPF0182 protein Cgl0786/cg0896 (985 aa).

The next 7 helical transmembrane spans lie at 19-39 (VTWI…SVGF), 63-83 (IVLF…AGYF), 115-135 (VMVI…QRSW), 176-196 (SMML…MGGI), 215-235 (TQLA…YWLD), 262-282 (KIIL…AIFL), and 290-310 (LAVV…PLML). The interval 904-944 (KEAQDIEEVDGTATTPSTDETDTDTDQPATETPTAPVSEAE) is disordered. Positions 929–939 (DQPATETPTAP) are enriched in low complexity.

This sequence belongs to the UPF0182 family.

The protein localises to the cell membrane. In Corynebacterium glutamicum (strain ATCC 13032 / DSM 20300 / JCM 1318 / BCRC 11384 / CCUG 27702 / LMG 3730 / NBRC 12168 / NCIMB 10025 / NRRL B-2784 / 534), this protein is UPF0182 protein Cgl0786/cg0896.